Here is a 349-residue protein sequence, read N- to C-terminus: Large ribosomal subunit protein uL2mz, N-terminal part (349 aa).

The protein belongs to the universal ribosomal protein uL2 family. As to quaternary structure, component of the mitochondrial ribosome large subunit.

Its subcellular location is the mitochondrion. This Arabidopsis thaliana (Mouse-ear cress) protein is Large ribosomal subunit protein uL2mz, N-terminal part.